Reading from the N-terminus, the 178-residue chain is V-type proton ATPase subunit c''2 (178 aa).

The Lumenal segment spans residues 1 to 24; it reads MSGVAIHASSWGAALVRISPYTFS. A helical transmembrane segment spans residues 25-45; it reads AIGIAISIGVSVLGAAWGIYI. The Cytoplasmic segment spans residues 46–64; it reads TGSSLIGAAIEAPRITSKN. A helical transmembrane segment spans residues 65 to 85; it reads LISVIFCEAVAIYGVIVAIIL. Topologically, residues 86 to 108 are lumenal; the sequence is QTKLESVPSSKMYDAESLRAGYA. A helical transmembrane segment spans residues 109-129; the sequence is IFASGIIVGFANLVCGLCVGI. The Cytoplasmic segment spans residues 130 to 147; that stretch reads IGSSCALSDAQNSTLFVK. Residues 148 to 168 form a helical membrane-spanning segment; that stretch reads ILVIEIFGSALGLFGVIVGII. Residues 169-178 lie on the Lumenal side of the membrane; the sequence is MSAQATWPTK.

Belongs to the V-ATPase proteolipid subunit family. In terms of assembly, V-ATPase is a heteromultimeric enzyme composed of a peripheral catalytic V1 complex (components A to H) attached to an integral membrane V0 proton pore complex (components: a, c, c'', d and e). The proteolipid components c and c'' are present as a hexameric ring that forms the proton-conducting pore. Interacts with APD2.

Its subcellular location is the endoplasmic reticulum membrane. It is found in the golgi apparatus membrane. In terms of biological role, proton-conducting pore forming subunit of the membrane integral V0 complex of vacuolar ATPase. V-ATPase is responsible for acidifying a variety of intracellular compartments in eukaryotic cells. This is V-type proton ATPase subunit c''2 (VHA-c''2) from Arabidopsis thaliana (Mouse-ear cress).